A 274-amino-acid polypeptide reads, in one-letter code: Orotidine 5'-phosphate decarboxylase (274 aa).

Substrate contacts are provided by residues aspartate 40, 62–64 (KTH), 93–102 (DRKFVDIGNT), tyrosine 227, and arginine 245. Lysine 95 acts as the Proton donor in catalysis.

It belongs to the OMP decarboxylase family.

The enzyme catalyses orotidine 5'-phosphate + H(+) = UMP + CO2. It participates in pyrimidine metabolism; UMP biosynthesis via de novo pathway; UMP from orotate: step 2/2. In Coccidioides immitis (strain RS) (Valley fever fungus), this protein is Orotidine 5'-phosphate decarboxylase (URA3).